The following is a 256-amino-acid chain: Nuclear shuttle protein (256 aa).

Positions 1–16 (MYSTSNRRGRSQTQRG) are enriched in polar residues. The disordered stretch occupies residues 1–46 (MYSTSNRRGRSQTQRGSHVRRTGVKRSYGAARGDDRRRPNVVSKTQ). The Bipartite nuclear localization signal signature appears at 21–42 (RTGVKRSYGAARGDDRRRPNVV). The short motif at 81-96 (SYVKTVPNRTRTYIKL) is the Nuclear localization signal element. The segment at 150-187 (ELFGARIHCHGNLSVVPALKDRYYIRHVTKRVVSLEKD) is interaction with Arabidopsis thaliana NSI protein. Residues 177-198 (VTKRVVSLEKDTLLIDLHGTTQ) carry the Nuclear export signal motif.

The protein belongs to the begomovirus nuclear shuttle protein family. As to quaternary structure, binds to single-stranded and double-stranded viral DNA. Interacts with the host nuclear shuttle interacting (NSI) protein. This interaction may allow NSP to recruit NSI monomers to the viral genome and thus regulate nuclear export of viral genome by NSP.

The protein resides in the host nucleus. It is found in the host cytoplasm. Its subcellular location is the host cell membrane. Binds to the genomic viral ssDNA, shuttles it into and out of the cell nucleus. Begomoviruses use 2 proteins to transport their DNA from cell to cell. The nuclear shuttle protein (NSP) shuttles it between nucleus and cytoplasm and the movement protein (MP) probably transports the DNA-NSP complex to the cell periphery and facilitates movement across the cell wall. The chain is Nuclear shuttle protein from Squash leaf curl virus (SLCV).